The sequence spans 662 residues: Putative cysteine-rich receptor-like protein kinase 16 (662 aa).

A signal peptide spans 1-26; it reads MIFIMKLKNLLPIFCFFLVSFSISSA. Gnk2-homologous domains follow at residues 27–131 and 137–244; these read QKCG…NRSF and MTPF…LYQF. The Extracellular portion of the chain corresponds to 27-277; sequence QKCGKTGLFK…DDGGKISTRN (251 aa). N55, N64, N106, N128, N145, N152, and N206 each carry an N-linked (GlcNAc...) asparagine glycan. A helical membrane pass occupies residues 278-298; the sequence is ILGITVALAFFITVLLVLGYA. The Cytoplasmic portion of the chain corresponds to 299–662; that stretch reads LSRRRKAYQE…DASITSVDLR (364 aa). Residues 335–612 enclose the Protein kinase domain; the sequence is FQKSNKLGHG…VFQMLTNTFL (278 aa). Residues 341-349 and K363 each bind ATP; that span reads LGHGGFGEV. The active-site Proton acceptor is the D460.

The protein belongs to the protein kinase superfamily. Ser/Thr protein kinase family. CRK subfamily.

It is found in the membrane. It catalyses the reaction L-seryl-[protein] + ATP = O-phospho-L-seryl-[protein] + ADP + H(+). The catalysed reaction is L-threonyl-[protein] + ATP = O-phospho-L-threonyl-[protein] + ADP + H(+). The polypeptide is Putative cysteine-rich receptor-like protein kinase 16 (CRK16) (Arabidopsis thaliana (Mouse-ear cress)).